Consider the following 211-residue polypeptide: Beta-crystallin B3 (211 aa).

Met1 is subject to N-acetylmethionine. An N-acetylalanine; in Beta-crystallin B3, N-terminally processed modification is found at Ala2. Residues 2–23 are N-terminal arm; that stretch reads AEQHSTPEQAAAGKSHGGLGGS. Beta/gamma crystallin 'Greek key' domains follow at residues 24 to 63 and 64 to 108; these read YKVI…QVES and GPWL…RPLH. Positions 109 to 113 are connecting peptide; it reads IDGPD. Beta/gamma crystallin 'Greek key' domains are found at residues 114 to 155 and 156 to 198; these read HKLH…RAIN and GTWV…RRIR. Positions 200–211 are C-terminal arm; sequence QKWHKRGVFLSS.

It belongs to the beta/gamma-crystallin family. In terms of assembly, homo/heterodimer, or complexes of higher-order. The structure of beta-crystallin oligomers seems to be stabilized through interactions between the N-terminal arms.

Crystallins are the dominant structural components of the vertebrate eye lens. This is Beta-crystallin B3 (CRYBB3) from Bos taurus (Bovine).